The following is a 434-amino-acid chain: Nicotinate phosphoribosyltransferase (434 aa).

His-242 is modified (phosphohistidine; by autocatalysis).

Belongs to the NAPRTase family. Transiently phosphorylated on a His residue during the reaction cycle. Phosphorylation strongly increases the affinity for substrates and increases the rate of nicotinate D-ribonucleotide production. Dephosphorylation regenerates the low-affinity form of the enzyme, leading to product release.

The enzyme catalyses nicotinate + 5-phospho-alpha-D-ribose 1-diphosphate + ATP + H2O = nicotinate beta-D-ribonucleotide + ADP + phosphate + diphosphate. It participates in cofactor biosynthesis; NAD(+) biosynthesis; nicotinate D-ribonucleotide from nicotinate: step 1/1. Functionally, catalyzes the synthesis of beta-nicotinate D-ribonucleotide from nicotinate and 5-phospho-D-ribose 1-phosphate at the expense of ATP. This Sinorhizobium fredii (strain NBRC 101917 / NGR234) protein is Nicotinate phosphoribosyltransferase.